We begin with the raw amino-acid sequence, 377 residues long: Putative F-box protein At3g13830 (377 aa).

The F-box domain occupies 6 to 52; that stretch reads TTTMSTLPMVLVDEILSRVPITSLRSLRSTCKRWEAQSKTNLVGGKA.

In Arabidopsis thaliana (Mouse-ear cress), this protein is Putative F-box protein At3g13830.